Reading from the N-terminus, the 304-residue chain is Energy-coupling factor transporter ATP-binding protein EcfA2 (304 aa).

Positions 3–261 (IIVKNISYIY…EKFLVENKLK (259 aa)) constitute an ABC transporter domain. 40-47 (GSTGSGKT) is an ATP binding site.

It belongs to the ABC transporter superfamily. Energy-coupling factor EcfA family. In terms of assembly, forms a stable energy-coupling factor (ECF) transporter complex composed of 2 membrane-embedded substrate-binding proteins (S component), 2 ATP-binding proteins (A component) and 2 transmembrane proteins (T component).

The protein localises to the cell membrane. ATP-binding (A) component of a common energy-coupling factor (ECF) ABC-transporter complex. Unlike classic ABC transporters this ECF transporter provides the energy necessary to transport a number of different substrates. The polypeptide is Energy-coupling factor transporter ATP-binding protein EcfA2 (Mycoplasmopsis pulmonis (strain UAB CTIP) (Mycoplasma pulmonis)).